The primary structure comprises 337 residues: tRNA N6-adenosine threonylcarbamoyltransferase (337 aa).

The Fe cation site is built by histidine 111 and histidine 115. Substrate-binding positions include 134–138 (LVSGG), aspartate 167, glycine 180, and asparagine 272. Aspartate 300 is a binding site for Fe cation.

The protein belongs to the KAE1 / TsaD family. The cofactor is Fe(2+).

It localises to the cytoplasm. The enzyme catalyses L-threonylcarbamoyladenylate + adenosine(37) in tRNA = N(6)-L-threonylcarbamoyladenosine(37) in tRNA + AMP + H(+). Functionally, required for the formation of a threonylcarbamoyl group on adenosine at position 37 (t(6)A37) in tRNAs that read codons beginning with adenine. Is involved in the transfer of the threonylcarbamoyl moiety of threonylcarbamoyl-AMP (TC-AMP) to the N6 group of A37, together with TsaE and TsaB. TsaD likely plays a direct catalytic role in this reaction. The protein is tRNA N6-adenosine threonylcarbamoyltransferase of Enterobacter sp. (strain 638).